A 95-amino-acid polypeptide reads, in one-letter code: Opiscorpine-2 (95 aa).

A signal peptide spans 1–19 (MNNKLTALIFHGLLAIASC). Residues 55–95 (EFMCMANMDPTGSCETHCQKASGEKGYCHGTKCKCGVPLSY) form the BetaSPN-type CS-alpha/beta domain. 3 disulfide bridges follow: C58/C82, C68/C87, and C72/C89.

This sequence belongs to the long chain scorpion toxin family. Class 3 subfamily. As to expression, expressed by the venom gland.

It localises to the secreted. Has antimicrobial activity against yeasts and bacteria. This Opistophthalmus carinatus (African yellow leg scorpion) protein is Opiscorpine-2.